We begin with the raw amino-acid sequence, 367 residues long: UDP-N-acetylglucosamine--N-acetylmuramyl-(pentapeptide) pyrophosphoryl-undecaprenol N-acetylglucosamine transferase (367 aa).

UDP-N-acetyl-alpha-D-glucosamine-binding positions include 15–17, Asn-126, Arg-169, Ser-197, and Gln-298; that span reads TGG.

Belongs to the glycosyltransferase 28 family. MurG subfamily.

It is found in the cell inner membrane. The enzyme catalyses di-trans,octa-cis-undecaprenyl diphospho-N-acetyl-alpha-D-muramoyl-L-alanyl-D-glutamyl-meso-2,6-diaminopimeloyl-D-alanyl-D-alanine + UDP-N-acetyl-alpha-D-glucosamine = di-trans,octa-cis-undecaprenyl diphospho-[N-acetyl-alpha-D-glucosaminyl-(1-&gt;4)]-N-acetyl-alpha-D-muramoyl-L-alanyl-D-glutamyl-meso-2,6-diaminopimeloyl-D-alanyl-D-alanine + UDP + H(+). It participates in cell wall biogenesis; peptidoglycan biosynthesis. Its function is as follows. Cell wall formation. Catalyzes the transfer of a GlcNAc subunit on undecaprenyl-pyrophosphoryl-MurNAc-pentapeptide (lipid intermediate I) to form undecaprenyl-pyrophosphoryl-MurNAc-(pentapeptide)GlcNAc (lipid intermediate II). This Bradyrhizobium sp. (strain BTAi1 / ATCC BAA-1182) protein is UDP-N-acetylglucosamine--N-acetylmuramyl-(pentapeptide) pyrophosphoryl-undecaprenol N-acetylglucosamine transferase.